We begin with the raw amino-acid sequence, 244 residues long: 2-C-methyl-D-erythritol 4-phosphate cytidylyltransferase (244 aa).

Belongs to the IspD/TarI cytidylyltransferase family. IspD subfamily.

The enzyme catalyses 2-C-methyl-D-erythritol 4-phosphate + CTP + H(+) = 4-CDP-2-C-methyl-D-erythritol + diphosphate. The protein operates within isoprenoid biosynthesis; isopentenyl diphosphate biosynthesis via DXP pathway; isopentenyl diphosphate from 1-deoxy-D-xylulose 5-phosphate: step 2/6. Functionally, catalyzes the formation of 4-diphosphocytidyl-2-C-methyl-D-erythritol from CTP and 2-C-methyl-D-erythritol 4-phosphate (MEP). This is 2-C-methyl-D-erythritol 4-phosphate cytidylyltransferase from Prosthecochloris aestuarii (strain DSM 271 / SK 413).